The following is a 471-amino-acid chain: ATP synthase subunit beta (471 aa).

156–163 (GGAGVGKT) lines the ATP pocket.

The protein belongs to the ATPase alpha/beta chains family. F-type ATPases have 2 components, CF(1) - the catalytic core - and CF(0) - the membrane proton channel. CF(1) has five subunits: alpha(3), beta(3), gamma(1), delta(1), epsilon(1). CF(0) has three main subunits: a(1), b(2) and c(9-12). The alpha and beta chains form an alternating ring which encloses part of the gamma chain. CF(1) is attached to CF(0) by a central stalk formed by the gamma and epsilon chains, while a peripheral stalk is formed by the delta and b chains.

The protein localises to the cell membrane. It carries out the reaction ATP + H2O + 4 H(+)(in) = ADP + phosphate + 5 H(+)(out). Produces ATP from ADP in the presence of a proton gradient across the membrane. The catalytic sites are hosted primarily by the beta subunits. This Lysinibacillus sphaericus (strain C3-41) protein is ATP synthase subunit beta.